Consider the following 458-residue polypeptide: Plant UBX domain-containing protein 2 (458 aa).

Residues 1-103 (MDDVKDKLKG…APQDGFDPYG (103 aa)) form a disordered region. Over residues 44–54 (PIQNRFNSSQA) the composition is skewed to polar residues. Pro residues predominate over residues 56 to 70 (NPTPRPKPNPNPLPE). A compositionally biased stretch (polar residues) spans 74–85 (SSSDQKISGSTR). The C2H2-type; atypical zinc finger occupies 121–143 (FECPICKNPFTSEEEVSVHVESC). Residues 181-248 (SSIDVLLRLF…EIWAVMDVPS (68 aa)) enclose the PUB domain. In terms of domain architecture, UBX spans 349–433 (KRYKRSMIRV…ELVPSALIRF (85 aa)).

As to quaternary structure, interacts with CDC48A in vitro and co-fractionates with membrane-associated but not soluble CDC48A in vivo.

The protein resides in the membrane. Functionally, facilitates the interaction of SYP31 and CDC48A, thereby regulating an CDC48A membrane-associated function. Appears to act as a negative regulator mediating the powdery mildew-plant interaction. This Arabidopsis thaliana (Mouse-ear cress) protein is Plant UBX domain-containing protein 2.